The sequence spans 451 residues: Aminodeoxychorismate synthase component 1 (451 aa).

Residues Ser-34, 41 to 44 (HNRF), and 238 to 240 (PFS) each bind L-tryptophan. Catalysis depends on Glu-256, which acts as the Proton donor. Lys-272 serves as the catalytic N6-(4-deoxychorismate)-lysine intermediate.

The protein belongs to the anthranilate synthase component I family. Monomer. Heterodimer consisting of two non-identical subunits: a glutamine amidotransferase subunit (PabA) and a aminodeoxychorismate synthase subunit (PabB). Mg(2+) is required as a cofactor.

The catalysed reaction is chorismate + L-glutamine = 4-amino-4-deoxychorismate + L-glutamate. The protein operates within cofactor biosynthesis; tetrahydrofolate biosynthesis; 4-aminobenzoate from chorismate: step 1/2. Its function is as follows. Part of a heterodimeric complex that catalyzes the two-step biosynthesis of 4-amino-4-deoxychorismate (ADC), a precursor of p-aminobenzoate (PABA) and tetrahydrofolate. In the first step, a glutamine amidotransferase (PabA) generates ammonia as a substrate that, along with chorismate, is used in the second step, catalyzed by aminodeoxychorismate synthase (PabB) to produce ADC. This chain is Aminodeoxychorismate synthase component 1 (pabB), found in Klebsiella aerogenes (Enterobacter aerogenes).